Consider the following 144-residue polypeptide: MAFDKLGRFFGIAEDDEMNEAPYTEAEQQEEEVPQAQKNERRANVVSINSGVGATSKIVLYEPRVYSDAKEVAQNLLNNKAVIINFARMDDEQARRIVDFITGTVYALNGEIQRVGDKIFLATPPKFETDGKIAELVEKKDKMD.

The interval Asp16–Arg42 is disordered.

This sequence belongs to the SepF family. As to quaternary structure, homodimer. Interacts with FtsZ.

The protein resides in the cytoplasm. Its function is as follows. Cell division protein that is part of the divisome complex and is recruited early to the Z-ring. Probably stimulates Z-ring formation, perhaps through the cross-linking of FtsZ protofilaments. Its function overlaps with FtsA. This Lactobacillus gasseri (strain ATCC 33323 / DSM 20243 / BCRC 14619 / CIP 102991 / JCM 1131 / KCTC 3163 / NCIMB 11718 / NCTC 13722 / AM63) protein is Cell division protein SepF.